A 3372-amino-acid polypeptide reads, in one-letter code: MPIGCKERPTFFEIFRTRCNKADLGPISLNWFEELCLEAPPYNSEPTEESGYKISYEPNLFKTPQRKPCHQLASTPIIFKEQGLIPPIYQQSPLKELGKDITNSKHRSCCTMKSKMDQTNDVTSPPLNSCLSESPLLRSTHVTPQREKSVVCGSLFHTPKLTKGQTPKRISESLGAEVDPDMSWSSSLATPPTLSSTVLIVRDEEASAAVFPNDTTAIFKSYFCNHDESLKKNDRFIPSGPDSENKSQREAKSQGLGKMVGNSCDKVNSCKDPFGNSTLNVLEDGVRERVADVSEEDSFPLCVPKCKTRNLQKIKTSKTRKNIFNETTDECKEAKKQMKENKHSFVSEMEANASDPLDSNVTNQKPFGNGSDKISKEVVLSSASESCHLTLSGLNGTHMEKLPLLCISSCDQNNSEKDLITTEKECTNFIILEDSLPQISGVPKCTEKILNEEIVVNKIDEGQCLESHEDSILAVKQAVFETSLIASPLQGIRKSIFRIRESPEETFSAVFSNNITDPNFKEEHEASESVLEKHSICSQKEDSLSTSSLDNGSWPATIKHTSVALKNSGLISTLKKKTKKFIYVVNDETSYQGLKTQKDQQSGLMNYSAQFEANVLEGPLTFANADSGLLHSSVKKTCLQNDSKEPILSLTNSFGTLLRKVSNKGSSSPNNKIISQDLDYKEAKIKKEKLQSFISTETNCLSSLQEKHCEDDTKSQRVADRKEEILPAVSQPSVPYSEVEDSGIHFQTLKSFSSDPDKSSQLTPHPRDPPSNPVGLSRGRESYEVSETLKCKNHEAGFELTKTMENSQEIHVLNEHAKKAKLLSTEKYVTEASPSMKVPFNQNAHLTIIQKDQKETTLISKITMNPNSEELFPDGDNFVFKITKERNVPVLGSIKELQDSDLCCVKEPVLENSTMVVYTDMDDKQAAKVSITKGFDSSNIDDLTEKDRNSIKQQLRMTLDQDSKSDITLDSDMKSNGNNDYMDNWARLSDPILNHNFGNGFRTASNKEIKLSEHNIKKSKMLFKDIEERYPTNLACIEIVNTPLESQEKLSKPHILDPQSINTVSGCVQSSAYVSDSENRHTTPPTLSLKRDFDSNHNLTPSQKAEITELSTILEESGSQFEFTQFRKPSHLKQKNPCEMPEKHLTISNTTPEEQKDGHLRLTINALSISQGDSSKKFEGIIGGKQKLACLSKTSCNKSASGHLTGKNEVEFRGFYSARGTKLNVCSEALQKAKKLFSDLENISEETSVEVDRSFSSSKCNGSVSMFKKENCNNEKKLNEKNNKYRLILQNNIEMTTGIFVAEDTEGYKRNIENKANKYTDASRNVYNFREADGSDSSKNDTVYIHKEENGLPYIDQHDIDLKLSSQFIKEGNTQIKEGLSDLTCLEVVKAEETLHVNTSNKEHLTANTMGRITKDFDIFDVSFQTASGKNIRVSRASLNKVTNLLDQKCTEEELNNFADSLNSELLSGIDINKADISHHGEMEILKKRQMKESDLTGTENKSLTLQQRPEYEIKKIKEPTILGFHTASGKRIEIAKESLDKVKNLFDEQEQDKSEMTNFSHRGTKMSKGREECEGGLRLACKTIEITPASKEEEMQKPLEKNLVSNEIVVVPRLLSDNLYKQTENLKIPNRASLKVKVHENTGKETAKKPTTCTNQSTYSATENSALSFYTGHGRKISVSQSSILEVKKWLRGGELDDQPEKTVYNISEYLPKSKVDNSGIEPVVRNVGERENTSVSEIMFTVREADTDPQSVNEDICVQRLVTNFSCKKENTAIKVTVSDSNNFDSTQKLNSDSNDAVPVYTTASSERVLVAHETKVAEGFTENCSMAIKQTTKSKPGKIVAGYRKAPDDSEDTICPNSLDGAECSSPSHKDFAETQSEQTPQLNQSISGFKKRSEIPPHQINLKTSDICKLSTGKRLQSISYTNACGIFSTASGKCVQVSDAALQKARQVFSKVEDSAKQPFSKVSFKHNEDHSDKFTREENTMIHTPQNLLSSAFSGFSTASGKQVPVSESALCKVKGILEEFDVMRTECGPQRSPTSRQDVSKMPPPSCVENKTPKHSVNSKLEKAYNKEFKLSSNSKIENGSSENHSVQVSPYPSQFKQDKQLIQGNKASLVENIHLLEKEQALPKNIKWKLETEAFPNLPLKTDTAIHSTDSKDPENYFETETVEIAKAFMEDGELTDADLLSHARHFLPTCQHSEETLVSNSRRGKRRGVLVSVGEPPIKRNLLNEFDRIIKNQEKSLKASKSTPDGIIKDRSLFMHHISLEPVTCGPFSTTKKRQEIQNPNFTAPGQKFLSKSHFYEHLALEKSSSNVSISGQPFCTVPATRSEKRGHSITPSKPVKVFVPPFKTKSRFLQDEQHISKNTHVEENKQKPNNIDEHSSGDSKNNINNSEIHQLNKNNSSQAATMVFTKCEKEPLDLIASLQNARDIQDMRIREKRKQHIFPQPGSLFLAKTSTVPRISLRVAVEGRVPSACSHKQLYMYGVSKHCVKINSKNAESFQFHTQDYFGKEVQWAKEGIQLADGGWLIPSNDGKAGKEEFYRALCDTPGVDPNLISRIWVYNHYRWIIWKLAAMEFAFPKEFANRCLSPERVLLQLKYRYDMEIDRSKRSAIKKIMERDDTAAKTLVLCISETISSSTDLSETSGSKTSGVGTKNVGIVELTDGWYAIKAQLDPPLLALVKKGRLTVGHKIIIHGAELAGSPDACTPLEAPESLILKISANSTRPACWYAKLGFFPDPRPFPLPLSSLFSDGGNVGCVDVVIQRTYPIQWMEKTPSGLCIFRNEREEEREATKYAEAQQKKLEVLFNKIQAEFEKHDENITKRCVPLRALTRQQVCALQDGAELYEAVKNAPDPASLEAYFSEEQIRALNNHRQMLNDKKQAQIQLEFRKAMESAEQGEQMLPRDVTTVWKMRIISYGKKEKDSVTLSIWRPSSDLYSLLTEGKRYRIYHLATSQSKSKSERAHIQLTATKKTQYQQLPASDELLFQVYQPREPLYFNKLLDPDFQPPCSEVDLIGFVVSVVKKIGFAPLVYLSDECHNLLAIKVWTDLNEDIVKPHTLIAASNLQWRPESKSGIPTLFAGDFSRFSASPKEGHFQETFHKMKNTIENVETFCNDAENKLVHILNANSPKVSTPMKDYASEPHTIQTVLGLGNKLSMSSPNSEMNYQSPLSLCKPKAKSVPTPGSAQMTSKSCYKGERELDDPKTCKKRKALDFLSRLPLPPPVSPICTFVSPAAQKAFQPPRSCGTKYETPIKKRELNSPQMTPLKFNDTSLVESDSIADEELALINTQALLSGLAGEDQLMSLNDSPRTAPTSSKDYVRPKSYPTAPGIRDCENPQASTEGGEPDVQDTDTVKRSSMRLQRRQQQT.

Positions 1–40 are interaction with PALB2; the sequence is MPIGCKERPTFFEIFRTRCNKADLGPISLNWFEELCLEAP. The disordered stretch occupies residues 234 to 260; the sequence is DRFIPSGPDSENKSQREAKSQGLGKMV. The segment covering 243–252 has biased composition (basic and acidic residues); it reads SENKSQREAK. A phosphoserine mark is found at Ser435 and Ser483. The tract at residues 630–992 is interaction with NPM1; that stretch reads LHSSVKKTCL…DNWARLSDPI (363 aa). The interval 704–783 is disordered; sequence LQEKHCEDDT…VGLSRGRESY (80 aa). The segment covering 705-725 has biased composition (basic and acidic residues); that stretch reads QEKHCEDDTKSQRVADRKEEI. A compositionally biased stretch (polar residues) spans 748–763; that stretch reads TLKSFSSDPDKSSQLT. 5 BRCA2 repeats span residues 994 to 1028, 1208 to 1242, 1417 to 1451, 1518 to 1552, and 1663 to 1697; these read NHNF…DIEE, NEVE…DLEN, FDIF…QKCT, KEPT…EQEQ, and TENS…GGEL. The tract at residues 995-2026 is interaction with RAD51; the sequence is HNFGNGFRTA…LCKVKGILEE (1032 aa). The disordered stretch occupies residues 1867-1891; that stretch reads CSSPSHKDFAETQSEQTPQLNQSIS. The span at 1877–1891 shows a compositional bias: polar residues; the sequence is ETQSEQTPQLNQSIS. Ser1924 is subject to Phosphoserine. A BRCA2 6 repeat occupies 1925–1959; the sequence is YTNACGIFSTASGKCVQVSDAALQKARQVFSKVED. Thr1990 carries the post-translational modification Phosphothreonine. The BRCA2 7 repeat unit spans residues 1995–2029; the sequence is LSSAFSGFSTASGKQVPVSESALCKVKGILEEFDV. The interval 2034 to 2062 is disordered; it reads CGPQRSPTSRQDVSKMPPPSCVENKTPKH. Position 2039 is a phosphoserine (Ser2039). Residues 2213–2279 are interaction with HSF2BP; that stretch reads GKRRGVLVSV…EPVTCGPFST (67 aa). The segment covering 2359–2387 has biased composition (basic and acidic residues); that stretch reads LQDEQHISKNTHVEENKQKPNNIDEHSSG. The tract at residues 2359 to 2395 is disordered; sequence LQDEQHISKNTHVEENKQKPNNIDEHSSGDSKNNINN. The segment at 2425-2776 is interaction with SEM1; it reads IASLQNARDI…QRTYPIQWME (352 aa). The short motif at 2626 to 2642 is the Nuclear export signal; masked by interaction with SEM1 element; that stretch reads AAKTLVLCISETISSST. A disordered region spans residues 3181–3203; the sequence is AKSVPTPGSAQMTSKSCYKGERE. Residues 3186–3196 are compositionally biased toward polar residues; it reads TPGSAQMTSKS. Ser3236 carries the phosphoserine; by CDK1 and CDK2 modification. Ser3264 carries the post-translational modification Phosphoserine. Residues 3308 to 3321 show a composition bias toward polar residues; it reads SLNDSPRTAPTSSK. The disordered stretch occupies residues 3308–3372; that stretch reads SLNDSPRTAP…MRLQRRQQQT (65 aa). Thr3331 carries the phosphothreonine; by CHEK1 and CHEK2 modification. Positions 3361–3372 are enriched in basic residues; it reads SSMRLQRRQQQT.

In terms of assembly, monomer and dimer. Interacts with RAD51; regulates RAD51 recruitment and function at sites of DNA repair. Interacts with SEM1, WDR16, USP11, DMC1, ROCK2 and NPM1. Interacts with both nonubiquitinated and monoubiquitinated FANCD2; this complex also includes XRCC3 and phosphorylated FANCG. Part of a BRCA complex containing BRCA1, BRCA2 and PALB2. Component of the homologous recombination repair (HR) complex composed of ERCC5/XPG, BRCA2, PALB2, DSS1 and RAD51. Within the complex, interacts with ERCC5/XPG and PALB2. Interacts directly with PALB2 which may serve as a scaffold for a HR complex containing PALB2, BRCA2, RAD51C, RAD51 and XRCC3. Interacts with BRCA1 only in the presence of PALB2 which serves as the bridging protein. Interacts with POLH; the interaction is direct. Interacts with the TREX-2 complex subunits PCID2 and SEM1. Interacts with HSF2BP and BRME1; the interaction with HSF2BP is direct and allows the formation of a ternary complex. The complex BRME1:HSF2BP:BRCA2 interacts with SPATA22, MEIOB and RAD51. Phosphorylated by ATM upon irradiation-induced DNA damage. Phosphorylation by CHEK1 and CHEK2 regulates interaction with RAD51. Phosphorylation at Ser-3236 by CDK1 and CDK2 is low in S phase when recombination is active, but increases as cells progress towards mitosis; this phosphorylation prevents homologous recombination-dependent repair during S phase and G2 by inhibiting RAD51 binding. In terms of processing, ubiquitinated in the absence of DNA damage; this does not lead to proteasomal degradation. In contrast, ubiquitination in response to DNA damage leads to proteasomal degradation.

Its subcellular location is the nucleus. The protein resides in the cytoplasm. The protein localises to the cytoskeleton. It is found in the microtubule organizing center. It localises to the centrosome. Functionally, involved in double-strand break repair and/or homologous recombination. Binds RAD51 and potentiates recombinational DNA repair by promoting assembly of RAD51 onto single-stranded DNA (ssDNA). Acts by targeting RAD51 to ssDNA over double-stranded DNA, enabling RAD51 to displace replication protein-A (RPA) from ssDNA and stabilizing RAD51-ssDNA filaments by blocking ATP hydrolysis. Part of a PALB2-scaffolded HR complex containing RAD51C and which is thought to play a role in DNA repair by HR. May participate in S phase checkpoint activation. Binds selectively to ssDNA, and to ssDNA in tailed duplexes and replication fork structures. May play a role in the extension step after strand invasion at replication-dependent DNA double-strand breaks; together with PALB2 is involved in both POLH localization at collapsed replication forks and DNA polymerization activity. In concert with NPM1, regulates centrosome duplication. Interacts with the TREX-2 complex (transcription and export complex 2) subunits PCID2 and SEM1, and is required to prevent R-loop-associated DNA damage and thus transcription-associated genomic instability, independently of its known role in homologous recombination. This is Breast cancer type 2 susceptibility protein homolog (BRCA2) from Felis catus (Cat).